We begin with the raw amino-acid sequence, 515 residues long: Serine--tRNA ligase, cytoplasmic (515 aa).

Residues 9–61 (RTDKGGDPEIIRETQRKRFKDVSLVDKLVQADTEWRKCRFTADNLNKAKNLCS) form an interaction with tRNA region. L-serine-binding residues include Thr271 and Arg302. ATP-binding positions include 302–304 (RQE) and 318–321 (VHQF). Glu325 provides a ligand contact to L-serine. Residue 391–394 (ELVS) coordinates ATP. Asn427 contributes to the L-serine binding site. The disordered stretch occupies residues 475–515 (PIDQETTKKQKKQQEGGKKKKHQGGDADLENKVENMSVNDS). Positions 479–507 (ETTKKQKKQQEGGKKKKHQGGDADLENKV) are enriched in basic and acidic residues. The Nuclear localization signal motif lies at 482–494 (KKQKKQQEGGKKK).

Belongs to the class-II aminoacyl-tRNA synthetase family. Type-1 seryl-tRNA synthetase subfamily.

Its subcellular location is the cytoplasm. It is found in the nucleus. The enzyme catalyses tRNA(Ser) + L-serine + ATP = L-seryl-tRNA(Ser) + AMP + diphosphate + H(+). It carries out the reaction tRNA(Sec) + L-serine + ATP = L-seryl-tRNA(Sec) + AMP + diphosphate + H(+). Catalyzes the attachment of serine to tRNA(Ser) in a two-step reaction: serine is first activated by ATP to form Ser-AMP and then transferred to the acceptor end of tRNA(Ser). Is probably also able to aminoacylate tRNA(Sec) with serine, to form the misacylated tRNA L-seryl-tRNA(Sec), which will be further converted into selenocysteinyl-tRNA(Sec). In the nucleus, binds to the vegfa core promoter and prevents myc binding and transcriptional activation by myc. Thereby inhibits the production of vegfa and sprouting angiogenesis mediated by vegfa. This Danio rerio (Zebrafish) protein is Serine--tRNA ligase, cytoplasmic (sars1).